The following is a 254-amino-acid chain: uncharacterized protein (254 aa).

8 helical membrane-spanning segments follow: residues 41 to 61 (VFVF…IKII), 64 to 84 (IFQA…EYFF), 91 to 111 (IYCG…LYIL), 125 to 145 (ILIG…FVLA), 146 to 166 (PAAL…LWSF), 172 to 192 (FILL…IQLL), 204 to 224 (MLLA…VLTP), and 232 to 252 (IIMS…LFLL).

Belongs to the TatC family.

It is found in the plastid. It localises to the chloroplast membrane. This is an uncharacterized protein from Porphyra purpurea (Red seaweed).